The sequence spans 398 residues: Homocysteine-responsive endoplasmic reticulum-resident ubiquitin-like domain member 2 protein (398 aa).

The region spanning 11 to 90 is the Ubiquitin-like domain; sequence VTLVIKAPNQ…HMVHLVCASR (80 aa). Disordered stretches follow at residues 90–143 and 212–247; these read RTPP…SIRH and NQST…NVAP. The span at 96–125 shows a compositional bias: low complexity; the sequence is PKASKSSKSMGTSSSGRSSSSGSANPGSTS. Over residues 233 to 245 the composition is skewed to pro residues; that stretch reads NPPPNPPRAPPNV. Residues 298 to 318 traverse the membrane as a helical segment; the sequence is FVMVMGALILVYMHQAGWFPL.

The protein localises to the membrane. Functionally, could be involved in the unfolded protein response (UPR) pathway. The polypeptide is Homocysteine-responsive endoplasmic reticulum-resident ubiquitin-like domain member 2 protein (herpud2) (Xenopus laevis (African clawed frog)).